A 553-amino-acid chain; its full sequence is Zinc finger protein Elbow (553 aa).

Disordered stretches follow at residues 59–243 (STKQ…MHSP) and 388–407 (GGGG…SGGS). 2 stretches are compositionally biased toward low complexity: residues 96 to 110 (SPVS…TGSV) and 121 to 134 (SSSS…TFKP). Composition is skewed to polar residues over residues 137-146 (PNNNISNITT), 153-173 (TNLS…KSMT), and 224-236 (TAST…NSKE). The tract at residues 287–480 (SASAAAAAAS…PDAVLSAAAA (194 aa)) is self-association. The tract at residues 287-553 (SASAAAAAAS…YGPRMGSSHP (267 aa)) is interaction with noc. Over residues 388–406 (GGGGGGSSKSSGSQGGSGG) the composition is skewed to gly residues. The segment at 437–466 (YVCSWIGSDAAYCGKRFGTSDDLFQHLRTH) adopts a C2H2-type zinc-finger fold.

This sequence belongs to the Elbow/Noc family. In terms of assembly, self-associates. Interacts with gro and noc.

Its function is as follows. May negatively regulate Notch-induced cell proliferation in the eye-head primordium. May act in leg and wing primordia to negatively regulate body-wall specifying genes and thereby promote appendage formation. Required for tracheal development. The polypeptide is Zinc finger protein Elbow (elB) (Drosophila melanogaster (Fruit fly)).